The following is a 208-amino-acid chain: Histone H1t (208 aa).

The span at 1–12 (MSETAPAASSTL) shows a compositional bias: polar residues. The interval 1–39 (MSETAPAASSTLVPAPVEKPATKRRGKKPGMATARKPRG) is disordered. Serine 9 carries the phosphoserine modification. Positions 38–111 (RGFSVSKLIP…GASGSFKLSK (74 aa)) constitute an H15 domain. Arginine 56 bears the Citrulline mark. A disordered region spans residues 93–208 (GVLVQTKGTG…TDLRKAAGRK (116 aa)). Positions 121 to 134 (KGKKSASAKAKKLG) are enriched in basic residues. The residue at position 141 (serine 141) is a Phosphoserine. The span at 143-154 (KSSKTKVVKKPK) shows a compositional bias: basic residues. Phosphothreonine is present on threonine 156. A phosphoserine mark is found at serine 163, serine 178, and serine 187. A compositionally biased stretch (basic and acidic residues) spans 199–208 (TDLRKAAGRK).

The protein belongs to the histone H1/H5 family. Post-translationally, phosphorylated in early spermatids. Citrullination at Arg-56 (H1R54ci) by PADI4 takes place within the DNA-binding site of H1 and results in its displacement from chromatin and global chromatin decondensation, thereby promoting pluripotency and stem cell maintenance. In terms of tissue distribution, testis-specific. Expressed in pachytene spermatocytes during meiotic prophase I.

It is found in the nucleus. The protein resides in the chromosome. Functionally, testis-specific histone H1 that forms less compacted chromatin compared to other H1 histone subtypes. Formation of more relaxed chromatin may be required to promote chromatin architecture required for proper chromosome regulation during meiosis, such as homologous recombination. Histones H1 act as linkers that bind to nucleosomes and compact polynucleosomes into a higher-order chromatin configuration. This chain is Histone H1t, found in Rattus norvegicus (Rat).